Here is a 641-residue protein sequence, read N- to C-terminus: Probable ATP-dependent helicase YpvA (641 aa).

Positions 29–303 constitute a Helicase ATP-binding domain; that stretch reads YDILPEKGFD…EFAELIEDAL (275 aa). Residue 64 to 71 coordinates ATP; that stretch reads AGVGTGKT. Residues C133, C197, C200, and C206 each contribute to the [4Fe-4S] cluster site. Positions 257 to 260 match the DEGH box motif; sequence DEGH.

The protein belongs to the helicase family. DinG subfamily. [4Fe-4S] cluster is required as a cofactor.

It carries out the reaction Couples ATP hydrolysis with the unwinding of duplex DNA at the replication fork by translocating in the 5'-3' direction. This creates two antiparallel DNA single strands (ssDNA). The leading ssDNA polymer is the template for DNA polymerase III holoenzyme which synthesizes a continuous strand.. The catalysed reaction is ATP + H2O = ADP + phosphate + H(+). In terms of biological role, might be a 5'-3' DNA helicase. In Bacillus subtilis (strain 168), this protein is Probable ATP-dependent helicase YpvA (ypvA).